The chain runs to 309 residues: Lactamase-like protein aptB (309 aa).

Zn(2+) contacts are provided by His97, His99, Asp101, and His102. Residue Asp101 is the Proton donor/acceptor of the active site.

It belongs to the metallo-beta-lactamase superfamily. Zn(2+) is required as a cofactor.

It carries out the reaction 2,3,6,8,9-pentahydroxy-1-oxo-3-(2-oxopropyl)-1,2,3,4-tetrahydroanthracene-2-carboxyl-[ACP] + H2O = 2,3,6,8,9-pentahydroxy-1-oxo-3-(2-oxopropyl)-1,2,3,4-tetrahydroanthracene-2-carboxylate + holo-[ACP] + H(+). Its pathway is secondary metabolite biosynthesis. Its function is as follows. Lactamase-like protein; part of the gene cluster that mediates the biosynthesis of asperthecin, an anthraquinone pigment. Polyketide synthase (PKS) aptA catalyzes the formation of the aromatic polyketide from acetyl coenzyme A and seven malonyl coenzyme A molecules. Polyketide is subsequently hydrolyzed by the action of aptB into endocrocin-9-anthrone. Endocrocin-9-anthrone is then oxidized into endocrocin by aptC. Endocrocin is likely to decarboxylate spontaneously to form emodin which explains why there is no decarboxylase in the asperthecin biosynthesis cluster. Finally, aptC or another endogenous oxygenase catalyzes additional oxidation steps to form asperthecin. In Emericella nidulans (strain FGSC A4 / ATCC 38163 / CBS 112.46 / NRRL 194 / M139) (Aspergillus nidulans), this protein is Lactamase-like protein aptB.